The primary structure comprises 110 residues: Protein RnfH (110 aa).

The tract at residues 86–110 is disordered; sequence RQRRVEKTRKAGSIEGRRWQNKDSR. Residues 100-110 show a composition bias toward basic and acidic residues; that stretch reads EGRRWQNKDSR.

This sequence belongs to the UPF0125 (RnfH) family.

This Paraburkholderia xenovorans (strain LB400) protein is Protein RnfH.